A 370-amino-acid chain; its full sequence is DNA primase large subunit PriL (370 aa).

Residues C230, C301, C310, and C317 each coordinate [4Fe-4S] cluster. The segment at 337–370 (EGEEAQGKEQGKEKDDGKEKENGKESEVKKKKEK) is disordered.

It belongs to the eukaryotic-type primase large subunit family. As to quaternary structure, heterodimer of a small subunit (PriS) and a large subunit (PriL). [4Fe-4S] cluster serves as cofactor.

In terms of biological role, regulatory subunit of DNA primase, an RNA polymerase that catalyzes the synthesis of short RNA molecules used as primers for DNA polymerase during DNA replication. Stabilizes and modulates the activity of the small subunit, increasing the rate of DNA synthesis, and conferring RNA synthesis capability. The DNA polymerase activity may enable DNA primase to also catalyze primer extension after primer synthesis. May also play a role in DNA repair. The polypeptide is DNA primase large subunit PriL (Methanosarcina mazei (strain ATCC BAA-159 / DSM 3647 / Goe1 / Go1 / JCM 11833 / OCM 88) (Methanosarcina frisia)).